The primary structure comprises 380 residues: MDINTDKYKNITRNLEREMINLNPIQRGGIIPTEAKKIIYEYWDGYSVCDYCSGRLDQIETPPINEFLEDMSKFLGMDITRPTHGARESKYAVMNSICKEGDYVVLDGNAHYTSYVALERAKLNYEKTEIEEYPTFRVIPESYAEKIDLLEDSKKNIGLILLTHVDGNYGNVADVEKVGKIAKSKGYPFLLNCAYSAGRMPIDGKKLNVDFIAASGHKSMAASGPCGLLSINKKYEDEVLETSKVNVVKELQMLGCTSRGIPILSLMASFEHLIERVKKWDLEVEKTRKVVNELEPLGFNQIGEKPRNHDIIRFETPILDKIAEKDKRRGFFFYEELKKRGIGGIRRGVTKEFKMSVYGLTNVQVDYVINSMKSIINELR.

Pyridoxal 5'-phosphate contacts are provided by residues 86–87 (AR), Asn192, and 215–217 (SGH). Lys218 is subject to N6-(pyridoxal phosphate)lysine.

This sequence belongs to the SepCysS family. In terms of assembly, homodimer. Interacts with SepRS. Pyridoxal 5'-phosphate serves as cofactor.

The enzyme catalyses O-phospho-L-seryl-tRNA(Cys) + hydrogen sulfide + H(+) = L-cysteinyl-tRNA(Cys) + phosphate. Functionally, converts O-phospho-L-seryl-tRNA(Cys) (Sep-tRNA(Cys)) to L-cysteinyl-tRNA(Cys) (Cys-tRNA(Cys)). In Methanococcus maripaludis (strain C7 / ATCC BAA-1331), this protein is O-phospho-L-seryl-tRNA:Cys-tRNA synthase.